The primary structure comprises 891 residues: Alanine--tRNA ligase (891 aa).

Zn(2+) contacts are provided by H564, H568, C677, and H681.

Belongs to the class-II aminoacyl-tRNA synthetase family. The cofactor is Zn(2+).

It localises to the cytoplasm. The enzyme catalyses tRNA(Ala) + L-alanine + ATP = L-alanyl-tRNA(Ala) + AMP + diphosphate. Functionally, catalyzes the attachment of alanine to tRNA(Ala) in a two-step reaction: alanine is first activated by ATP to form Ala-AMP and then transferred to the acceptor end of tRNA(Ala). Also edits incorrectly charged Ser-tRNA(Ala) and Gly-tRNA(Ala) via its editing domain. This Bradyrhizobium sp. (strain ORS 278) protein is Alanine--tRNA ligase.